An 85-amino-acid chain; its full sequence is Large ribosomal subunit protein bL27 (85 aa).

The segment at 1–25 is disordered; that stretch reads MAHKKGVGSSRNGRDSNPKMLGVKR.

Belongs to the bacterial ribosomal protein bL27 family.

The protein is Large ribosomal subunit protein bL27 of Roseiflexus castenholzii (strain DSM 13941 / HLO8).